We begin with the raw amino-acid sequence, 198 residues long: Peroxiredoxin-2 (198 aa).

N-acetylalanine is present on A2. The region spanning 6 to 164 (AQIGKSAPDF…ALRLVQAFQY (159 aa)) is the Thioredoxin domain. At S11 the chain carries Phosphoserine. C51 serves as the catalytic Cysteine sulfenic acid (-SOH) intermediate. S112 bears the Phosphoserine mark. Phosphothreonine is present on T182. K196 bears the N6-acetyllysine mark.

This sequence belongs to the peroxiredoxin family. AhpC/Prx1 subfamily. In terms of assembly, homodimer; disulfide-linked, upon oxidation. 5 homodimers assemble to form a ring-like decamer. Interacts with TIPIN. The enzyme can be inactivated by further oxidation of the cysteine sulfenic acid (C(P)-SOH) to sulphinic acid (C(P)-SO2H) instead of its condensation to a disulfide bond. It can be reactivated by forming a transient disulfide bond with sulfiredoxin SRXN1, which reduces the cysteine sulfinic acid in an ATP- and Mg-dependent manner. Post-translationally, acetylation increases resistance to transition to high molecular-mass complexes. Deacetylated by HDAC6 which decreases reducing activity. Widely expressed with highest levels in bone marrow. High levels also found in heart, brain, kidney and skeletal muscle. Lower levels in liver, lung and thymus.

Its subcellular location is the cytoplasm. It catalyses the reaction a hydroperoxide + [thioredoxin]-dithiol = an alcohol + [thioredoxin]-disulfide + H2O. Thiol-specific peroxidase that catalyzes the reduction of hydrogen peroxide and organic hydroperoxides to water and alcohols, respectively. Plays a role in cell protection against oxidative stress by detoxifying peroxides and as sensor of hydrogen peroxide-mediated signaling events. Might participate in the signaling cascades of growth factors and tumor necrosis factor-alpha by regulating the intracellular concentrations of H(2)O(2). The chain is Peroxiredoxin-2 (Prdx2) from Mus musculus (Mouse).